A 577-amino-acid polypeptide reads, in one-letter code: Sulfite reductase [NADPH] hemoprotein beta-component (577 aa).

[4Fe-4S] cluster contacts are provided by C440, C446, C486, and C490. A siroheme-binding site is contributed by C490.

Belongs to the nitrite and sulfite reductase 4Fe-4S domain family. Alpha(8)-beta(8). The alpha component is a flavoprotein, the beta component is a hemoprotein. Siroheme serves as cofactor. It depends on [4Fe-4S] cluster as a cofactor.

It catalyses the reaction hydrogen sulfide + 3 NADP(+) + 3 H2O = sulfite + 3 NADPH + 4 H(+). The protein operates within sulfur metabolism; hydrogen sulfide biosynthesis; hydrogen sulfide from sulfite (NADPH route): step 1/1. In terms of biological role, component of the sulfite reductase complex that catalyzes the 6-electron reduction of sulfite to sulfide. This is one of several activities required for the biosynthesis of L-cysteine from sulfate. The polypeptide is Sulfite reductase [NADPH] hemoprotein beta-component (Vibrio cholerae serotype O1 (strain ATCC 39315 / El Tor Inaba N16961)).